We begin with the raw amino-acid sequence, 142 residues long: Protein archease (142 aa).

Residues D12 and D141 each coordinate Ca(2+).

It belongs to the archease family.

Activates the tRNA-splicing ligase complex by facilitating the enzymatic turnover of catalytic subunit RtcB. Acts by promoting the guanylylation of RtcB, a key intermediate step in tRNA ligation. Can also alter the NTP specificity of RtcB such that ATP, dGTP or ITP is used efficiently. The chain is Protein archease from Thermococcus kodakarensis (strain ATCC BAA-918 / JCM 12380 / KOD1) (Pyrococcus kodakaraensis (strain KOD1)).